Here is a 245-residue protein sequence, read N- to C-terminus: Mitochondrial import inner membrane translocase subunit Tim21 (245 aa).

The N-terminal 18 residues, 1 to 18, are a transit peptide targeting the mitochondrion; the sequence is MICAFLRVVRHAEKLHGS. The disordered stretch occupies residues 64–97; sequence FWTQGPDPRKAKEDSSKQVSINRNQREETGVSTS. The span at 70-79 shows a compositional bias: basic and acidic residues; it reads DPRKAKEDSS. A helical membrane pass occupies residues 108–128; sequence TYLIVVLFGVSITGSLLYTIF.

The protein belongs to the TIM21 family. In terms of assembly, component of the TIM23 complex. Component of the MITRAC (mitochondrial translation regulation assembly intermediate of cytochrome c oxidase complex) complex, the core components of this complex being COA3/MITRAC12 and COX14. Interacts with COA3 and MT-CO1/COX1.

Its subcellular location is the mitochondrion membrane. Functionally, participates in the translocation of transit peptide-containing proteins across the mitochondrial inner membrane. Also required for assembly of mitochondrial respiratory chain complex I and complex IV as component of the MITRAC (mitochondrial translation regulation assembly intermediate of cytochrome c oxidase complex) complex. Probably shuttles between the presequence translocase and respiratory-chain assembly intermediates in a process that promotes incorporation of early nuclear-encoded subunits into these complexes. This chain is Mitochondrial import inner membrane translocase subunit Tim21 (Timm21), found in Rattus norvegicus (Rat).